Reading from the N-terminus, the 393-residue chain is Riboflavin biosynthesis protein RibBA (393 aa).

The segment at Met1–Lys200 is DHBP synthase. D-ribulose 5-phosphate is bound by residues Arg27–Glu28, Asp32, Arg139–Thr143, and Glu163. Glu28 serves as a coordination point for Mg(2+). His142 lines the Mg(2+) pocket. The tract at residues Leu201–Ile393 is GTP cyclohydrolase II. Residue Arg249–Ala253 coordinates GTP. Cys254, Cys265, and Cys267 together coordinate Zn(2+). Residues Gln270, Glu291 to Arg293, and Thr313 each bind GTP. Catalysis depends on Asp325, which acts as the Proton acceptor; for GTP cyclohydrolase activity. Arg327 acts as the Nucleophile; for GTP cyclohydrolase activity in catalysis. GTP contacts are provided by Ser348 and Lys353.

This sequence in the N-terminal section; belongs to the DHBP synthase family. In the C-terminal section; belongs to the GTP cyclohydrolase II family. Mg(2+) is required as a cofactor. Requires Mn(2+) as cofactor. It depends on Zn(2+) as a cofactor.

It catalyses the reaction D-ribulose 5-phosphate = (2S)-2-hydroxy-3-oxobutyl phosphate + formate + H(+). It carries out the reaction GTP + 4 H2O = 2,5-diamino-6-hydroxy-4-(5-phosphoribosylamino)-pyrimidine + formate + 2 phosphate + 3 H(+). It functions in the pathway cofactor biosynthesis; riboflavin biosynthesis; 2-hydroxy-3-oxobutyl phosphate from D-ribulose 5-phosphate: step 1/1. Its pathway is cofactor biosynthesis; riboflavin biosynthesis; 5-amino-6-(D-ribitylamino)uracil from GTP: step 1/4. Its function is as follows. Catalyzes the conversion of D-ribulose 5-phosphate to formate and 3,4-dihydroxy-2-butanone 4-phosphate. In terms of biological role, catalyzes the conversion of GTP to 2,5-diamino-6-ribosylamino-4(3H)-pyrimidinone 5'-phosphate (DARP), formate and pyrophosphate. The polypeptide is Riboflavin biosynthesis protein RibBA (Staphylococcus aureus (strain COL)).